The primary structure comprises 294 residues: Protein RarD (294 aa).

Over 1–11 (MDAKQTRQGVL) the chain is Cytoplasmic. The helical transmembrane segment at 12-34 (LALAAYFIWGIAPAYFKLIYYVP) threads the bilayer. Residues 18–145 (FIWGIAPAYF…AVCGVLVQLW (128 aa)) form the EamA domain. Residues 35–37 (ADE) lie on the Periplasmic side of the membrane. A helical membrane pass occupies residues 38-60 (ILTHRVIWSFFFMVALLSVSRQW). Topologically, residues 61-72 (RQVKRLLKTPKK) are cytoplasmic. A helical transmembrane segment spans residues 73 to 95 (IFLLALSAVLVGGNWLLFIWAVN). Over 96–99 (NHHM) the chain is Periplasmic. The chain crosses the membrane as a helical span at residues 100-122 (LEASLGYFINPLVNILLGMIFLG). Residues 123 to 128 (ERFRRM) are Cytoplasmic-facing. A helical transmembrane segment spans residues 129-146 (QWLAVILAVCGVLVQLWT). Topologically, residues 147 to 149 (FGS) are periplasmic. The chain crosses the membrane as a helical span at residues 150 to 167 (LPIIALGLAFSFAFYGLV). Residues 168-179 (RKKIAVEAQTGM) lie on the Cytoplasmic side of the membrane. Residues 180-197 (LVETLWLLPVAAIYLFGI) form a helical membrane-spanning segment. Topologically, residues 198 to 211 (ADSPTSHMGQNALS) are periplasmic. The chain crosses the membrane as a helical span at residues 212–234 (LNLLLMAAGVVTTIPLLCFTGAA). Residues 235-238 (TRLR) are Cytoplasmic-facing. The helical transmembrane segment at 239–261 (LSTLGFFQYIGPTLMFLLAVTFY) threads the bilayer. Residues 262-270 (GEVPGADKM) lie on the Periplasmic side of the membrane. The helical transmembrane segment at 271–290 (VTFAFIWVALAIFVMDAIYT) threads the bilayer. The Cytoplasmic portion of the chain corresponds to 291 to 294 (QRKK).

This sequence belongs to the EamA transporter family.

Its subcellular location is the cell inner membrane. The chain is Protein RarD (rarD) from Salmonella typhimurium (strain LT2 / SGSC1412 / ATCC 700720).